The chain runs to 331 residues: Fructose-1,6-bisphosphatase class 1 2 (331 aa).

4 residues coordinate Mg(2+): Glu-80, Asp-98, Leu-100, and Asp-101. Residues 101–104 and Asn-189 each bind substrate; that span reads DGSS. Glu-261 contributes to the Mg(2+) binding site.

The protein belongs to the FBPase class 1 family. In terms of assembly, homotetramer. Mg(2+) is required as a cofactor.

It is found in the cytoplasm. It catalyses the reaction beta-D-fructose 1,6-bisphosphate + H2O = beta-D-fructose 6-phosphate + phosphate. It participates in carbohydrate biosynthesis; Calvin cycle. The polypeptide is Fructose-1,6-bisphosphatase class 1 2 (Cereibacter sphaeroides (strain ATCC 17023 / DSM 158 / JCM 6121 / CCUG 31486 / LMG 2827 / NBRC 12203 / NCIMB 8253 / ATH 2.4.1.) (Rhodobacter sphaeroides)).